Consider the following 479-residue polypeptide: MAQHSVYFPDAFLAQMREAMPSTLSFDEFIAACQRPLRRSIRINTLKISVADFLALTAPYGWLLTPIPWCDEGFWIERDDEDALPLGSTAEHLSGLFYIQEASSMLPVAALFADDNHPQRVMDMAAAPGSKTTQIAARMGNHGAILANEFSASRVKILHANLCRCGVANTALTHFDGRVFGAALPEMFDAILLDAPCSGEGVVRKDPDALKNWSPESNLDIAATQRELLESAFHALRPGGTLVYSTCTLNRQENEAVCLWLKETYTDAVEFLPLNDLFPDADRALTPEGFLHVFPQIYDCEGFFVARLRKISSLPALPAPTYKVGNFPFIPLKGHEALHITQAASAVGLLWDENLHLWQREKEVWLFPAAIESLIGKVRFSRLGIKLAESHNKGYRWQHEATVALACPNHAHALELSPQEAEEWYRGRDIYPQTIPAVDDVLVTFQHQPLGLAKRIGSRIKNSYPRELVRDGKLFTSNV.

Residues 125-131 (AAAPGSK), glutamate 149, aspartate 176, and aspartate 194 contribute to the S-adenosyl-L-methionine site. The active-site Nucleophile is the cysteine 247.

The protein belongs to the class I-like SAM-binding methyltransferase superfamily. RsmB/NOP family.

The protein resides in the cytoplasm. The enzyme catalyses cytidine(1407) in 16S rRNA + S-adenosyl-L-methionine = 5-methylcytidine(1407) in 16S rRNA + S-adenosyl-L-homocysteine + H(+). Its function is as follows. Specifically methylates the cytosine at position 1407 (m5C1407) of 16S rRNA. The chain is Ribosomal RNA small subunit methyltransferase F from Salmonella arizonae (strain ATCC BAA-731 / CDC346-86 / RSK2980).